The sequence spans 180 residues: Cell division protein SepF (180 aa).

The interval 1–66 is disordered; sequence MAFSFKSFFG…NRNGFAYDNG (66 aa). Residues 12–23 are compositionally biased toward acidic residues; sequence ADDEEEEYEDSG. Residues 24 to 57 show a composition bias toward low complexity; that stretch reads YEQQPNQGQQQPVNSQQQNTSNQSYSGYNNQNQN.

The protein belongs to the SepF family. In terms of assembly, homodimer. Interacts with FtsZ.

The protein localises to the cytoplasm. In terms of biological role, cell division protein that is part of the divisome complex and is recruited early to the Z-ring. Probably stimulates Z-ring formation, perhaps through the cross-linking of FtsZ protofilaments. Its function overlaps with FtsA. This is Cell division protein SepF from Oenococcus oeni (strain ATCC BAA-331 / PSU-1).